Reading from the N-terminus, the 166-residue chain is SUMO-conjugating enzyme UBC9 (166 aa).

The region spanning 4 to 157 is the UBC core domain; sequence IAAGRLAEER…VKKEAVKYAA (154 aa). Cys-93 (glycyl thioester intermediate) is an active-site residue.

The protein belongs to the ubiquitin-conjugating enzyme family. As to quaternary structure, interacts with brd-1 and rad-51. Interacts with smo-1 and sop-2. Interacts with bet-1 (via BROMO domain 2). Interacts with isoforms 1 and 2 of X-box-binding protein xbp-1.

The protein resides in the nucleus envelope. It functions in the pathway protein modification; protein sumoylation. Its function is as follows. Accepts the ubiquitin-like protein smo-1 from the aos-1-uba-2 E1 complex and catalyzes its covalent attachment to other proteins with the help of an E3 ligase such as gei-17. Required to sumoylate the ETS transcription factor lin-1, Polycomb protein sop-2, and intermediate filament proteins, such as ifb-1. Required for embryonic development, fertility, vulval morphogenesis, inhibition of vulval cell fates, lifespan, and neuromuscular activity. This chain is SUMO-conjugating enzyme UBC9, found in Caenorhabditis elegans.